Here is a 622-residue protein sequence, read N- to C-terminus: Membrane protein insertase YidC (622 aa).

A helical membrane pass occupies residues 8-28; that stretch reads LFLALILSMGIWMGVNYFFFP. Positions 33 to 61 are enriched in basic and acidic residues; the sequence is KTSETKEVKVDKPSDDKQDQIQKEKKESR. The interval 33-70 is disordered; sequence KTSETKEVKVDKPSDDKQDQIQKEKKESRTTIPSKGTK. 4 consecutive transmembrane segments (helical) span residues 413–433, 484–504, 532–552, and 571–591; these read FTIPNYGWSIIIFAILFKLVF, VGGCLPMVIQIPIFIALYTAF, AIPYFTQTGIGLNLLALLMVG, and MLMYVMPVMMLYIFWNMPSGV.

Belongs to the OXA1/ALB3/YidC family. Type 1 subfamily. In terms of assembly, interacts with the Sec translocase complex via SecD. Specifically interacts with transmembrane segments of nascent integral membrane proteins during membrane integration.

The protein resides in the cell inner membrane. Required for the insertion and/or proper folding and/or complex formation of integral membrane proteins into the membrane. Involved in integration of membrane proteins that insert both dependently and independently of the Sec translocase complex, as well as at least some lipoproteins. Aids folding of multispanning membrane proteins. The polypeptide is Membrane protein insertase YidC (Leptospira borgpetersenii serovar Hardjo-bovis (strain JB197)).